Consider the following 372-residue polypeptide: Carbamoyl phosphate synthase small chain (372 aa).

A CPSase region spans residues 1-182; the sequence is MTLYCKRGYK…PKAPIVHLGN (182 aa). Positions 53, 234, and 236 each coordinate L-glutamine. Positions 186–372 constitute a Glutamine amidotransferase type-1 domain; sequence TIVVVDCGVK…KFKKMVSRNA (187 aa). Cys-262 serves as the catalytic Nucleophile. 5 residues coordinate L-glutamine: Leu-263, Gln-266, Asn-304, Gly-306, and Tyr-307. Active-site residues include His-347 and Glu-349.

Belongs to the CarA family. Composed of two chains; the small (or glutamine) chain promotes the hydrolysis of glutamine to ammonia, which is used by the large (or ammonia) chain to synthesize carbamoyl phosphate. Tetramer of heterodimers (alpha,beta)4.

It carries out the reaction hydrogencarbonate + L-glutamine + 2 ATP + H2O = carbamoyl phosphate + L-glutamate + 2 ADP + phosphate + 2 H(+). The enzyme catalyses L-glutamine + H2O = L-glutamate + NH4(+). The protein operates within amino-acid biosynthesis; L-arginine biosynthesis; carbamoyl phosphate from bicarbonate: step 1/1. It participates in pyrimidine metabolism; UMP biosynthesis via de novo pathway; (S)-dihydroorotate from bicarbonate: step 1/3. Functionally, small subunit of the glutamine-dependent carbamoyl phosphate synthetase (CPSase). CPSase catalyzes the formation of carbamoyl phosphate from the ammonia moiety of glutamine, carbonate, and phosphate donated by ATP, constituting the first step of 2 biosynthetic pathways, one leading to arginine and/or urea and the other to pyrimidine nucleotides. The small subunit (glutamine amidotransferase) binds and cleaves glutamine to supply the large subunit with the substrate ammonia. The protein is Carbamoyl phosphate synthase small chain of Sulfurisphaera tokodaii (strain DSM 16993 / JCM 10545 / NBRC 100140 / 7) (Sulfolobus tokodaii).